The chain runs to 436 residues: 4-hydroxyphenylpyruvate dioxygenase (436 aa).

VOC domains follow at residues 38–194 (RFHH…GFEV) and 210–370 (RLDH…IFTK). Histidine 213, histidine 295, and glutamate 381 together coordinate Fe cation.

It belongs to the 4HPPD family. It depends on Fe cation as a cofactor.

It is found in the cytoplasm. The catalysed reaction is 3-(4-hydroxyphenyl)pyruvate + O2 = homogentisate + CO2. It participates in amino-acid degradation; L-phenylalanine degradation; acetoacetate and fumarate from L-phenylalanine: step 3/6. Its pathway is cofactor biosynthesis; prenylquinone biosynthesis. This Plectranthus scutellarioides (Coleus) protein is 4-hydroxyphenylpyruvate dioxygenase.